Here is a 408-residue protein sequence, read N- to C-terminus: Glutathione-independent formaldehyde dehydrogenase (408 aa).

Zn(2+) is bound at residue C61. Positions 62, 63, and 66 each coordinate NAD(+). Zn(2+) is bound by residues H82, C112, C115, C118, C126, and D184. Residues V212, D232, R237, V277, H284, P311, L313, G348, and T350 each coordinate NAD(+).

Belongs to the zinc-containing alcohol dehydrogenase family. It depends on Zn(2+) as a cofactor.

The enzyme catalyses formaldehyde + NAD(+) + H2O = formate + NADH + 2 H(+). With respect to regulation, activity is not inhibited by EDTA, which is probably not sufficient to displace the bound metal. Dehydrogenase that catalyzes the NAD(+)-dependent oxidation of formaldehyde. Exhibits lower activity with acetaldehyde (about 10-fold lower than for formaldehyde), but cannot use methanol, ethanol, 1-butanol, glyoxal or formic acid. Is involved in formaldehyde detoxification. The polypeptide is Glutathione-independent formaldehyde dehydrogenase (Bacillus subtilis (strain 168)).